The primary structure comprises 396 residues: Ribosomal RNA large subunit methyltransferase I (396 aa).

A PUA domain is found at 2 to 81 (TVSIYLAKGR…EAIDKDFFVR (80 aa)).

It belongs to the methyltransferase superfamily. RlmI family.

The protein localises to the cytoplasm. The catalysed reaction is cytidine(1962) in 23S rRNA + S-adenosyl-L-methionine = 5-methylcytidine(1962) in 23S rRNA + S-adenosyl-L-homocysteine + H(+). Its function is as follows. Specifically methylates the cytosine at position 1962 (m5C1962) of 23S rRNA. The sequence is that of Ribosomal RNA large subunit methyltransferase I from Aliivibrio fischeri (strain MJ11) (Vibrio fischeri).